A 524-amino-acid polypeptide reads, in one-letter code: Putative mediator of RNA polymerase II transcription subunit 8 (524 aa).

Coiled-coil stretches lie at residues Leu-117–Lys-146 and Asn-175–Gln-211. 3 disordered regions span residues Val-312–Ile-340, Leu-356–Gly-379, and Gln-430–Leu-451. Positions Ser-314–Leu-333 are enriched in polar residues. Low complexity predominate over residues Leu-356–Ser-374. Residues Ile-398–Leu-478 adopt a coiled-coil conformation.

It belongs to the Mediator complex subunit 8 family. As to quaternary structure, component of the Mediator complex. May be part of a multisubunit E3 ubiquitin-protein ligase complex.

It is found in the nucleus. It functions in the pathway protein modification; protein ubiquitination. Its function is as follows. Component of the Mediator complex, a coactivator involved in the regulated transcription of nearly all RNA polymerase II-dependent genes. Mediator functions as a bridge to convey information from gene-specific regulatory proteins to the basal RNA polymerase II transcription machinery. Mediator is recruited to promoters by direct interactions with regulatory proteins and serves as a scaffold for the assembly of a functional preinitiation complex with RNA polymerase II and the general transcription factors. May play a role as a target recruitment subunit in E3 ubiquitin-protein ligase complexes and thus in ubiquitination and subsequent proteasomal degradation of target proteins. The polypeptide is Putative mediator of RNA polymerase II transcription subunit 8 (med8) (Dictyostelium discoideum (Social amoeba)).